Consider the following 213-residue polypeptide: Adenylate kinase (213 aa).

Residue 10-15 (GAGKGT) coordinates ATP. An NMP region spans residues 30–59 (STGDMFRAAMANQTEMGVLAKSYIDKGDLV). AMP-binding positions include Thr-31, Arg-36, 57–59 (DLV), 86–89 (GYPR), and Gln-93. Residues 127 to 160 (GRIINKKTGETFHKIFNPPVGDYKEEDFYQREDD) form an LID region. ATP is bound by residues Arg-128 and 137–138 (TF). Arg-157 and Arg-168 together coordinate AMP. Lys-196 is an ATP binding site.

The protein belongs to the adenylate kinase family. As to quaternary structure, monomer.

It localises to the cytoplasm. It catalyses the reaction AMP + ATP = 2 ADP. The protein operates within purine metabolism; AMP biosynthesis via salvage pathway; AMP from ADP: step 1/1. Catalyzes the reversible transfer of the terminal phosphate group between ATP and AMP. Plays an important role in cellular energy homeostasis and in adenine nucleotide metabolism. This is Adenylate kinase from Streptococcus equi subsp. equi (strain 4047).